We begin with the raw amino-acid sequence, 121 residues long: Holin-like protein CidA (121 aa).

3 helical membrane passes run 27–47 (VHLP…SLKF), 58–78 (GADF…VAVI), and 89–109 (IDLI…TGIL).

The protein belongs to the CidA/LrgA family. CidA subfamily.

The protein resides in the cell membrane. Its function is as follows. Increases the activity of extracellular murein hydrolases possibly by mediating their export via hole formation. Inhibited by the antiholin-like proteins LrgAB. In an unstressed cell, the LrgAB products probably inhibit the function of the CidA protein. When a cell is stressed by the addition of antibiotics or by other factors in the environment, CidA possibly oligomerizes within the bacterial cell membrane, creating lesions that disrupt the proton motive force, which in turn results in loss of cell viability. These lesions are also hypothesized to regulate the subsequent cell lysis by either allowing the murein hydrolases access to the cell wall substrate and/or regulating their activity by a possible change in the cell wall pH that results from loss of membrane potential. This is Holin-like protein CidA from Bacillus cytotoxicus (strain DSM 22905 / CIP 110041 / 391-98 / NVH 391-98).